Consider the following 129-residue polypeptide: Small ribosomal subunit protein uS11 (129 aa).

The protein belongs to the universal ribosomal protein uS11 family. As to quaternary structure, part of the 30S ribosomal subunit. Interacts with proteins S7 and S18. Binds to IF-3.

Located on the platform of the 30S subunit, it bridges several disparate RNA helices of the 16S rRNA. Forms part of the Shine-Dalgarno cleft in the 70S ribosome. The sequence is that of Small ribosomal subunit protein uS11 from Oleidesulfovibrio alaskensis (strain ATCC BAA-1058 / DSM 17464 / G20) (Desulfovibrio alaskensis).